A 203-amino-acid polypeptide reads, in one-letter code: Urease accessory protein UreG (203 aa).

13–20 (GPVGSGKT) provides a ligand contact to GTP.

The protein belongs to the SIMIBI class G3E GTPase family. UreG subfamily. Homodimer. UreD, UreF and UreG form a complex that acts as a GTP-hydrolysis-dependent molecular chaperone, activating the urease apoprotein by helping to assemble the nickel containing metallocenter of UreC. The UreE protein probably delivers the nickel.

Its subcellular location is the cytoplasm. In terms of biological role, facilitates the functional incorporation of the urease nickel metallocenter. This process requires GTP hydrolysis, probably effectuated by UreG. The protein is Urease accessory protein UreG of Psychromonas ingrahamii (strain DSM 17664 / CCUG 51855 / 37).